The following is a 414-amino-acid chain: Serine hydroxymethyltransferase (414 aa).

(6S)-5,6,7,8-tetrahydrofolate is bound by residues leucine 118 and 122–124; that span reads GHL. N6-(pyridoxal phosphate)lysine is present on lysine 226. 353-355 lines the (6S)-5,6,7,8-tetrahydrofolate pocket; the sequence is SPF.

Belongs to the SHMT family. Homodimer. Pyridoxal 5'-phosphate serves as cofactor.

It is found in the cytoplasm. The catalysed reaction is (6R)-5,10-methylene-5,6,7,8-tetrahydrofolate + glycine + H2O = (6S)-5,6,7,8-tetrahydrofolate + L-serine. It functions in the pathway one-carbon metabolism; tetrahydrofolate interconversion. Its pathway is amino-acid biosynthesis; glycine biosynthesis; glycine from L-serine: step 1/1. Functionally, catalyzes the reversible interconversion of serine and glycine with tetrahydrofolate (THF) serving as the one-carbon carrier. This reaction serves as the major source of one-carbon groups required for the biosynthesis of purines, thymidylate, methionine, and other important biomolecules. Also exhibits THF-independent aldolase activity toward beta-hydroxyamino acids, producing glycine and aldehydes, via a retro-aldol mechanism. In Blochmanniella floridana, this protein is Serine hydroxymethyltransferase.